We begin with the raw amino-acid sequence, 310 residues long: MAKKKMGLLVMAYGTPYKEEDIERYYTHIRHGRKPSSELLEDLKQRYKAIGGISPLAKITLEQAKQLEKRLNDIQDDIEFQMYLGLKHIEPFVEDAVRQMHEDGIKEAVSIVLAPHFSTFSIQSYNERAKAEAKKLGGPVIYTIDSWHDEPKFIDYWVEKVKEVYASMTEEEREKAVLIVSAHSLPEKIIAAGDPYPQQLAETAKLIAEKAGVKHYAVGWQSAGNTPEPWLGPDVQDLTRQLHQEKGYTSFVYVPVGFVADHLEVLYDNDIECKQVTEEIGANYYRPEMPNANPKFIDALATVVLKRIKL.

Residues tyrosine 13, arginine 30, 46 to 47 (RY), serine 54, and tyrosine 125 each bind Fe-coproporphyrin III. Fe(2+) contacts are provided by histidine 183 and glutamate 264.

Belongs to the ferrochelatase family.

The protein localises to the cytoplasm. The enzyme catalyses Fe-coproporphyrin III + 2 H(+) = coproporphyrin III + Fe(2+). The protein operates within porphyrin-containing compound metabolism; protoheme biosynthesis. Its function is as follows. Involved in coproporphyrin-dependent heme b biosynthesis. Catalyzes the insertion of ferrous iron into coproporphyrin III to form Fe-coproporphyrin III. This Geobacillus sp. (strain WCH70) protein is Coproporphyrin III ferrochelatase.